Here is a 256-residue protein sequence, read N- to C-terminus: GTP cyclohydrolase FolE2 (256 aa).

Belongs to the GTP cyclohydrolase IV family.

It catalyses the reaction GTP + H2O = 7,8-dihydroneopterin 3'-triphosphate + formate + H(+). Its pathway is cofactor biosynthesis; 7,8-dihydroneopterin triphosphate biosynthesis; 7,8-dihydroneopterin triphosphate from GTP: step 1/1. In terms of biological role, converts GTP to 7,8-dihydroneopterin triphosphate. In Caldicellulosiruptor saccharolyticus (strain ATCC 43494 / DSM 8903 / Tp8T 6331), this protein is GTP cyclohydrolase FolE2.